The following is a 357-amino-acid chain: Ribosomal RNA large subunit methyltransferase M (357 aa).

Residues serine 183, 216–219, aspartate 235, aspartate 255, and aspartate 271 contribute to the S-adenosyl-L-methionine site; that span reads APGG. Catalysis depends on lysine 300, which acts as the Proton acceptor.

Belongs to the class I-like SAM-binding methyltransferase superfamily. RNA methyltransferase RlmE family. RlmM subfamily. As to quaternary structure, monomer.

It localises to the cytoplasm. It catalyses the reaction cytidine(2498) in 23S rRNA + S-adenosyl-L-methionine = 2'-O-methylcytidine(2498) in 23S rRNA + S-adenosyl-L-homocysteine + H(+). Functionally, catalyzes the 2'-O-methylation at nucleotide C2498 in 23S rRNA. This is Ribosomal RNA large subunit methyltransferase M from Pseudomonas fluorescens (strain ATCC BAA-477 / NRRL B-23932 / Pf-5).